Consider the following 360-residue polypeptide: Aminomethyltransferase (360 aa).

Belongs to the GcvT family. In terms of assembly, the glycine cleavage system is composed of four proteins: P, T, L and H.

It carries out the reaction N(6)-[(R)-S(8)-aminomethyldihydrolipoyl]-L-lysyl-[protein] + (6S)-5,6,7,8-tetrahydrofolate = N(6)-[(R)-dihydrolipoyl]-L-lysyl-[protein] + (6R)-5,10-methylene-5,6,7,8-tetrahydrofolate + NH4(+). Functionally, the glycine cleavage system catalyzes the degradation of glycine. The protein is Aminomethyltransferase of Pseudomonas syringae pv. tomato (strain ATCC BAA-871 / DC3000).